Reading from the N-terminus, the 320-residue chain is N-acetylneuraminate lyase (320 aa).

Aceneuramate contacts are provided by T51 and T52. Catalysis depends on Y143, which acts as the Proton donor. K173 functions as the Schiff-base intermediate with substrate in the catalytic mechanism. Aceneuramate contacts are provided by S175, G199, D201, E202, and S218.

This sequence belongs to the DapA family. NanA subfamily. Homotetramer.

It localises to the cytoplasm. The enzyme catalyses aceneuramate = aldehydo-N-acetyl-D-mannosamine + pyruvate. The protein operates within amino-sugar metabolism; N-acetylneuraminate degradation. Its function is as follows. Catalyzes the cleavage of N-acetylneuraminic acid (sialic acid) to form pyruvate and N-acetylmannosamine via a Schiff base intermediate. It prevents sialic acids from being recycled and returning to the cell surface. Involved in the N-glycolylneuraminic acid (Neu5Gc) degradation pathway. This chain is N-acetylneuraminate lyase, found in Rattus norvegicus (Rat).